Reading from the N-terminus, the 308-residue chain is Dual oxidase maturation factor 1 (308 aa).

Residues 1 to 21 lie on the Extracellular side of the membrane; it reads MQANIFPFYPQPRTSFKFDTK. Residues 22–42 traverse the membrane as a helical segment; it reads IIEIIIICIVTACTFIIILPG. Topologically, residues 43–49 are cytoplasmic; sequence IRGKSRS. A helical membrane pass occupies residues 50-70; the sequence is IWLFRILTSLFIGAVILAVNF. Residues 71 to 172 are Extracellular-facing; it reads TSDWETGIVT…SPCGLFQQYC (102 aa). Residues Asn94, Asn107, and Asn119 are each glycosylated (N-linked (GlcNAc...) asparagine). The chain crosses the membrane as a helical span at residues 173 to 195; that stretch reads ISTYYSSEIMWVAFGSWILYNVL. Residues 196–199 lie on the Cytoplasmic side of the membrane; it reads FSMP. Residues 200 to 220 traverse the membrane as a helical segment; that stretch reads VILYGICMMFVTAICMLVSLI. Topologically, residues 221–247 are extracellular; that stretch reads SFASVRQAPVCNIHFGNAVLKTHFGVS. The helical transmembrane segment at 248 to 268 threads the bilayer; it reads YWLSLVTGLFCLIVSLVLLFL. Residues 269-308 are Cytoplasmic-facing; that stretch reads YKTQPKVIRLIFSYGEEEDLSDKSENEEEHSSALSLNEML.

It belongs to the DUOXA family.

It is found in the membrane. In terms of biological role, possible role in maturation and transport from the endoplasmic reticulum to the plasma membrane of functional dual oxidase. This Xenopus tropicalis (Western clawed frog) protein is Dual oxidase maturation factor 1 (duoxa1).